We begin with the raw amino-acid sequence, 179 residues long: Bifunctional protein PyrR (179 aa).

Residues 99 to 111 (VILVDDVLYTGRT) carry the PRPP-binding motif.

This sequence belongs to the purine/pyrimidine phosphoribosyltransferase family. PyrR subfamily. Homodimer and homohexamer; in equilibrium.

It catalyses the reaction UMP + diphosphate = 5-phospho-alpha-D-ribose 1-diphosphate + uracil. Functionally, regulates transcriptional attenuation of the pyrimidine nucleotide (pyr) operon by binding in a uridine-dependent manner to specific sites on pyr mRNA. This disrupts an antiterminator hairpin in the RNA and favors formation of a downstream transcription terminator, leading to a reduced expression of downstream genes. Its function is as follows. Also displays a weak uracil phosphoribosyltransferase activity which is not physiologically significant. The sequence is that of Bifunctional protein PyrR from Brevibacillus brevis (strain 47 / JCM 6285 / NBRC 100599).